A 354-amino-acid chain; its full sequence is Uroporphyrinogen decarboxylase (354 aa).

Substrate is bound by residues 27-31 (RQAGR), D77, Y153, T208, and H326.

This sequence belongs to the uroporphyrinogen decarboxylase family. As to quaternary structure, homodimer.

Its subcellular location is the cytoplasm. The enzyme catalyses uroporphyrinogen III + 4 H(+) = coproporphyrinogen III + 4 CO2. It participates in porphyrin-containing compound metabolism; protoporphyrin-IX biosynthesis; coproporphyrinogen-III from 5-aminolevulinate: step 4/4. Its function is as follows. Catalyzes the decarboxylation of four acetate groups of uroporphyrinogen-III to yield coproporphyrinogen-III. In Neisseria gonorrhoeae (strain NCCP11945), this protein is Uroporphyrinogen decarboxylase.